The chain runs to 1116 residues: Anillin (1116 aa).

Composition is skewed to basic and acidic residues over residues 1–25 and 85–94; these read MDPF…KMAD and KQPKTPELPK. 4 disordered regions span residues 1 to 188, 205 to 257, 304 to 363, and 443 to 522; these read MDPF…PVGR, DLSH…PKDT, KPNE…KVAT, and NVWT…PRLV. Positions 101–119 are enriched in polar residues; sequence ASHQQLRATNQTPQVSLLS. A compositionally biased stretch (basic and acidic residues) spans 120–133; sequence SDKELTASDVKDAS. Residues 142–254 are interactions with myh9 and myh10; that stretch reads LADQRRYWDN…QDTTSCSQRP (113 aa). A compositionally biased stretch (low complexity) spans 226 to 242; it reads SKESTTSSASASMNSHS. The tract at residues 255-418 is interaction with F-actin; the sequence is KDTTVNKAVC…LKQNDISSTA (164 aa). Composition is skewed to polar residues over residues 304–326 and 336–356; these read KPNE…SSPQ and YSYQ…VQTQ. Residues 416-443 are a coiled coil; that stretch reads STASLAQQQKKEREKELAALRGRYDRRN. Polar residues predominate over residues 453–472; sequence QGTFPETSSNLPTSDVASCS. The 125-residue stretch at 975–1099 folds into the PH domain; sequence SVEDKGFLTM…WMQKLNQFLV (125 aa).

In terms of assembly, interacts with and bundles F-actin. Interacts with the non-muscle myosin II heavy chains myh9 and myh10, and these interactions may be enhanced by the phosphorylation of myosin II regulatory light chain by mylk.

It localises to the nucleus. Its subcellular location is the cytoplasm. The protein resides in the cytoskeleton. The protein localises to the cell cortex. It is found in the cell projection. It localises to the bleb. Its function is as follows. Required for cytokinesis. Essential for the structural integrity of the cleavage furrow and for completion of cleavage furrow ingression. Plays a role in bleb assembly during metaphase and anaphase of mitosis. May play a significant role in podocyte cell migration. The chain is Anillin (anln) from Xenopus laevis (African clawed frog).